The chain runs to 413 residues: S-adenosylmethionine synthase (413 aa).

H15 contributes to the ATP binding site. Residue D17 participates in Mg(2+) binding. A K(+)-binding site is contributed by E43. Positions 56 and 100 each coordinate L-methionine. The segment at 100-110 (QSPDISQGVNE) is flexible loop. ATP contacts are provided by residues 171 to 173 (DGK), 248 to 249 (KF), D257, 263 to 264 (RK), A280, and K284. Position 257 (D257) interacts with L-methionine. K288 contacts L-methionine.

It belongs to the AdoMet synthase family. As to quaternary structure, homotetramer; dimer of dimers. Mg(2+) serves as cofactor. K(+) is required as a cofactor.

The protein localises to the cytoplasm. The catalysed reaction is L-methionine + ATP + H2O = S-adenosyl-L-methionine + phosphate + diphosphate. It participates in amino-acid biosynthesis; S-adenosyl-L-methionine biosynthesis; S-adenosyl-L-methionine from L-methionine: step 1/1. Functionally, catalyzes the formation of S-adenosylmethionine (AdoMet) from methionine and ATP. The overall synthetic reaction is composed of two sequential steps, AdoMet formation and the subsequent tripolyphosphate hydrolysis which occurs prior to release of AdoMet from the enzyme. In Prochlorococcus marinus (strain AS9601), this protein is S-adenosylmethionine synthase.